Here is a 689-residue protein sequence, read N- to C-terminus: UvrABC system protein C (689 aa).

Residues 16 to 95 (TNPGVYRFRD…IKEFAPRFNI (80 aa)) enclose the GIY-YIG domain. One can recognise a UVR domain in the interval 208-243 (KPYIRELTRQMNEAAECMDFETAAARRDDVGALERV). Residues 316–337 (LAPAASGRRRTARHGSEDVVGQ) form a disordered region.

This sequence belongs to the UvrC family. Interacts with UvrB in an incision complex.

The protein resides in the cytoplasm. In terms of biological role, the UvrABC repair system catalyzes the recognition and processing of DNA lesions. UvrC both incises the 5' and 3' sides of the lesion. The N-terminal half is responsible for the 3' incision and the C-terminal half is responsible for the 5' incision. This Kocuria rhizophila (strain ATCC 9341 / DSM 348 / NBRC 103217 / DC2201) protein is UvrABC system protein C.